Reading from the N-terminus, the 950-residue chain is F-box only protein 10 (950 aa).

In terms of domain architecture, F-box spans 1 to 48 (METGGLPLELWRMILAYLHLPDLGRCSLVCRAWYELILSLDSTRWRQL). 2 PbH1 repeats span residues 198–217 (SGHIQFDNCNFENGHIQVHG) and 238–260 (VPLCMLENCEFVGSENNCVTVEG). Residues 313-364 (IEGSQSPTSPVCSSPKPGSKEAEVGSDGERVAQTPDSSDGGLSPSGEDEDDE) form a disordered region. Residues 315–324 (GSQSPTSPVC) are compositionally biased toward polar residues. Residues Ser-321 and Ser-326 each carry the phosphoserine modification. Positions 330–342 (GSKEAEVGSDGER) are enriched in basic and acidic residues. Residues 347 to 357 (PDSSDGGLSPS) show a composition bias toward low complexity. 15 PbH1 repeats span residues 423-444 (VQGCLIRKCLFRDGKGGVFVCS), 467-489 (NSKIVMLRNDIYRCRASGIFLRL), 490-512 (EGGGLIAGNNIYHNAEAGVDIRK), 513-535 (KSNPLILCNQIHHGLRSGIVVLG), 536-558 (NGKGVIRNNQIFSNKEAGIYILY), 559-581 (HGNPIVSGNHIFKGRAAGIAVNE), 582-604 (NGKGLITENVIRENQWGGVDIRR), 605-627 (GGVPILRSNLICFGYSDGVVVGD), 628-650 (EGKGLIEGNTIYANKGCGVWMMS), 651-673 (SSLPHVTSNHVSYNGLYGVAVFS), 713-735 (ITVALVESNSINHNGASGIFVQS), 736-758 (SEALQVVANVIHANGDRGITIVQ), 760-782 (SQLTRVANNSISCNRQSGVKVEF), 783-805 (QCKVELRGNGIYDNRGHGIITKG), and 828-850 (RSDTKVLKNRIHSFRAYGIAVRG).

Component of the SCF(FBXO10) complex consisting of CUL1, SKP1 and FBXO10. Interacts with BCL2. Interacts with PRDM1. In terms of tissue distribution, particularly highly expressed in B-cells.

It localises to the cytoplasm. It participates in protein modification; protein ubiquitination. In terms of biological role, substrate-recognition component of the SCF (SKP1-CUL1-F-box protein)-type E3 ubiquitin ligase complex. Mediates the ubiquitination and degradation of BCL2, an antiapoptotic protein, thereby playing a role in apoptosis by controlling the stability of BCL2. Targets also the receptor for advanced glycation end products RAGE for ubiquitination and subsequent lysosomal degradation. Directly controls HGAL/GCSAM ubiquitination and degradation and thereby decreases BCR signaling. The sequence is that of F-box only protein 10 (Fbxo10) from Mus musculus (Mouse).